A 192-amino-acid chain; its full sequence is Per os infectivity factor 6 (192 aa).

Residues 154–174 (IAYVFLFFICIVLLSVLAVFF) traverse the membrane as a helical segment.

The protein localises to the host membrane. The protein resides in the virion. It is found in the host cytoplasm. Its subcellular location is the host nucleus. Its function is as follows. Per os infectivity factor. In Autographa californica nuclear polyhedrosis virus (AcMNPV), this protein is Per os infectivity factor 6 (AC68).